The primary structure comprises 203 residues: Chromophore lyase CpcT/CpeT 3 (203 aa).

It belongs to the CpcT/CpeT biliprotein lyase family.

Its function is as follows. Covalently attaches a chromophore to Cys residue(s) of phycobiliproteins. This Gloeobacter violaceus (strain ATCC 29082 / PCC 7421) protein is Chromophore lyase CpcT/CpeT 3.